The following is a 302-amino-acid chain: NAD kinase 1 (302 aa).

Catalysis depends on aspartate 67, which acts as the Proton acceptor. Residues 67 to 68, arginine 72, 148 to 149, lysine 178, and aspartate 180 each bind NAD(+); these read DG and ND.

The protein belongs to the NAD kinase family. A divalent metal cation serves as cofactor.

The protein localises to the cytoplasm. The enzyme catalyses NAD(+) + ATP = ADP + NADP(+) + H(+). In terms of biological role, involved in the regulation of the intracellular balance of NAD and NADP, and is a key enzyme in the biosynthesis of NADP. Catalyzes specifically the phosphorylation on 2'-hydroxyl of the adenosine moiety of NAD to yield NADP. The chain is NAD kinase 1 from Prochlorococcus marinus (strain NATL2A).